Here is a 683-residue protein sequence, read N- to C-terminus: MIEEKLMSEFPCDKPVLVTCGLPYANGSAHIGHLRTYIPADMFVRTLRMMGQETVFVCGSDAHGTPIIVNAEEQKISPRQLVDKYHVQFDSIFKKCGVIFDRYGNTDDPTNHARTKSIVSELQKNGYVYPKEIKVAYCPQCQRGLPDRYVEGVCPYCSSIARGDECDIGCQRHLEPGEILDPKCKVCGSKAEVRTQEHFFFKLSEFGDFLQEYLNTLHATPNAVNYAMEWAKELKDWCITRNLEWGVKYPGHEDLVVYVWVDAPIGYIAFTEEYAKAAGKNWEDLWKGDSRIIHFIGGDIIYHHCIFWPAMLKGAGYTLPWGVVASGMIKVNDKKFSKSRGYIVWVEDDYLAHGFHPDLLRYYILSYTSHTKDINFSWTEFQTKINKELVGSYGNFVNRVLTFIDSKGIDVKGTIDPKISSAIKTAIDMVKTEIGNYEFKKICDSIITLSDVGNTYFQSHEPWKLIKENPAACENVLFNCIQIVKALAILSEPTVPEKAKEIWGMLGYDPATLASARIDDALVPYENRPRPKPSILFTKLEDKKIAEMTKIMDERVKAAEAKLNGKKAEEELEPQLPPITIDDFAKMELRVGKVIASEKIKGSKKLLKNLIDLGEDKPRQIVSGIAEVYTPEEMVGKTVIVIANLKPTKIMGVESNGMILAADSNGATLLTVEKPSEPGTKVR.

Residues 23–33 (PYANGSAHIGH) carry the 'HIGH' region motif. Positions 154, 157, 166, and 170 each coordinate Zn(2+). The 'KMSKS' region motif lies at 335 to 339 (KFSKS). An ATP-binding site is contributed by Lys-338. The tRNA-binding domain maps to 583-683 (DFAKMELRVG…KPSEPGTKVR (101 aa)).

Belongs to the class-I aminoacyl-tRNA synthetase family. MetG type 1 subfamily. As to quaternary structure, homodimer. It depends on Zn(2+) as a cofactor.

It localises to the cytoplasm. The catalysed reaction is tRNA(Met) + L-methionine + ATP = L-methionyl-tRNA(Met) + AMP + diphosphate. Is required not only for elongation of protein synthesis but also for the initiation of all mRNA translation through initiator tRNA(fMet) aminoacylation. The protein is Methionine--tRNA ligase of Methanocella arvoryzae (strain DSM 22066 / NBRC 105507 / MRE50).